The sequence spans 331 residues: MTIIVTGAAGFIGANLVKGLNDRGETDIIAVDNLTRADKFRNLVDCEISDYLDKTEFVERFARGDFGKVRAIFHEGACSDTMETDGRYMMENNYRYTLALMKACLDQGVQFLYASSAATYGASDTFREDREFEKPLNVYGYSKFLFDQIVRRTLPGALSQIVGFRYFNVYGPREQHKGRMASVAFHNFNQFRTEGTVKLFGEYNGYPQGGQMRDFVSVEDVVKVNLFFFDHPDKSGIFNLGTGRAQPFNDIATTVVNTLREAEGKPALSTEELAQEGLVEYVKFPDALRGKYQCFTQADQGKLRAAGYSAPFLTVQEGVARYCRWLMAQPA.

NADP(+) is bound by residues F11 to I12, D32 to N33, K39, K54, E75 to S79, and N92. Residue Y139 is the Proton acceptor of the active site. K143 lines the NADP(+) pocket. N168 is a substrate binding site. The NADP(+) site is built by V169 and K177. K177 acts as the Proton acceptor in catalysis. Substrate contacts are provided by residues R179, H186, F200–Y203, R213, and Y292.

Belongs to the NAD(P)-dependent epimerase/dehydratase family. HldD subfamily. Homopentamer. NADP(+) is required as a cofactor.

It catalyses the reaction ADP-D-glycero-beta-D-manno-heptose = ADP-L-glycero-beta-D-manno-heptose. The protein operates within nucleotide-sugar biosynthesis; ADP-L-glycero-beta-D-manno-heptose biosynthesis; ADP-L-glycero-beta-D-manno-heptose from D-glycero-beta-D-manno-heptose 7-phosphate: step 4/4. Catalyzes the interconversion between ADP-D-glycero-beta-D-manno-heptose and ADP-L-glycero-beta-D-manno-heptose via an epimerization at carbon 6 of the heptose. The polypeptide is ADP-L-glycero-D-manno-heptose-6-epimerase (Ralstonia nicotianae (strain ATCC BAA-1114 / GMI1000) (Ralstonia solanacearum)).